We begin with the raw amino-acid sequence, 105 residues long: Large ribosomal subunit protein bL21 (105 aa).

The protein belongs to the bacterial ribosomal protein bL21 family. In terms of assembly, part of the 50S ribosomal subunit. Contacts protein L20.

In terms of biological role, this protein binds to 23S rRNA in the presence of protein L20. This Stenotrophomonas maltophilia (strain R551-3) protein is Large ribosomal subunit protein bL21.